A 323-amino-acid chain; its full sequence is DNA repair and recombination protein RadA (323 aa).

Gly114–Thr121 serves as a coordination point for ATP.

This sequence belongs to the eukaryotic RecA-like protein family.

Involved in DNA repair and in homologous recombination. Binds and assemble on single-stranded DNA to form a nucleoprotein filament. Hydrolyzes ATP in a ssDNA-dependent manner and promotes DNA strand exchange between homologous DNA molecules. This is DNA repair and recombination protein RadA from Picrophilus torridus (strain ATCC 700027 / DSM 9790 / JCM 10055 / NBRC 100828 / KAW 2/3).